Consider the following 89-residue polypeptide: Small ribosomal subunit protein uS15 (89 aa).

The protein belongs to the universal ribosomal protein uS15 family. In terms of assembly, part of the 30S ribosomal subunit. Forms a bridge to the 50S subunit in the 70S ribosome, contacting the 23S rRNA.

In terms of biological role, one of the primary rRNA binding proteins, it binds directly to 16S rRNA where it helps nucleate assembly of the platform of the 30S subunit by binding and bridging several RNA helices of the 16S rRNA. Its function is as follows. Forms an intersubunit bridge (bridge B4) with the 23S rRNA of the 50S subunit in the ribosome. The chain is Small ribosomal subunit protein uS15 from Prochlorococcus marinus (strain MIT 9515).